Here is a 480-residue protein sequence, read N- to C-terminus: Beta-glucosidase A (480 aa).

The active-site Proton donor is E177. E378 acts as the Nucleophile in catalysis.

It belongs to the glycosyl hydrolase 1 family.

It catalyses the reaction Hydrolysis of terminal, non-reducing beta-D-glucosyl residues with release of beta-D-glucose.. This chain is Beta-glucosidase A (bglA), found in Enterobacter agglomerans (Erwinia herbicola).